Consider the following 139-residue polypeptide: Endoribonuclease YbeY (139 aa).

H99, H103, and H109 together coordinate Zn(2+).

This sequence belongs to the endoribonuclease YbeY family. Requires Zn(2+) as cofactor.

It localises to the cytoplasm. In terms of biological role, single strand-specific metallo-endoribonuclease involved in late-stage 70S ribosome quality control and in maturation of the 3' terminus of the 16S rRNA. This is Endoribonuclease YbeY from Sulfurimonas denitrificans (strain ATCC 33889 / DSM 1251) (Thiomicrospira denitrificans (strain ATCC 33889 / DSM 1251)).